The chain runs to 207 residues: Small ribosomal subunit protein bS6c (207 aa).

The N-terminal 59 residues, 1–59, are a transit peptide targeting the chloroplast; it reads MASSLCVSNSTICPLPNVSSQPLLSFSHSLRPFISKSKPMCASIQKRDGSQFVVKSQAL. The interval 69–99 is disordered; the sequence is GFGSDDDPTSPSGSGVSTALEDKPEPQCPPG. Positions 77 to 86 are enriched in low complexity; it reads TSPSGSGVST.

The protein belongs to the bacterial ribosomal protein bS6 family. As to quaternary structure, part of the 30S ribosomal subunit.

The protein resides in the plastid. The protein localises to the chloroplast. In terms of biological role, binds together with bS18 to 16S ribosomal RNA. This chain is Small ribosomal subunit protein bS6c (RPS6), found in Arabidopsis thaliana (Mouse-ear cress).